A 3323-amino-acid chain; its full sequence is Mucin-3A (3323 aa).

Residues 1–15 (MQLLGLLGLLWMLKA) form the signal peptide. Disordered stretches follow at residues 218 to 243 (TISS…TSPT), 270 to 289 (TSMT…SSPT), 325 to 345 (ISRS…STVT), 359 to 380 (GTLS…TETA), 539 to 677 (MSAS…PSTE), 700 to 722 (NASS…GTNS), 734 to 756 (ETSS…KTAK), 909 to 991 (SFSS…TLTP), 1170 to 1201 (ISSA…TTPT), 1318 to 1356 (AESA…FPSS), 1380 to 1442 (AMTS…TNPV), 1484 to 1509 (TMTE…ETAK), 1714 to 1746 (TPSS…TPTS), 1793 to 1844 (FTSS…YPTS), and 1900 to 2056 (TSHS…SHST). Over residues 270 to 284 (TSMTTTASQPTATNT) the composition is skewed to low complexity. A compositionally biased stretch (polar residues) spans 545–563 (GTTHTESISSPPASTSTLH). A compositionally biased stretch (low complexity) spans 564–618 (TTAESTLAPTTTTSFTTSTTMEPPSTTAATTGTGQTTFTSSTATFPETTTPTPTT). Polar residues predominate over residues 619-629 (DMSTESLTTAM). The span at 630-676 (TSPPITSSVTSTNTVTSMTTTTSPPTTTNSFTSLTSMPLSSTPVPST) shows a compositional bias: low complexity. A compositionally biased stretch (polar residues) spans 700 to 721 (NASSMTTSETTYPNSPTGPGTN). Positions 909–918 (SFSSSMSESS) are enriched in low complexity. Residues 919-932 (AGTTHTESISSPRG) are compositionally biased toward polar residues. Positions 933-991 (TTSTLHTTVESTPSPTTTTSFTTSTMMEPPSSTVSTTGRGQTTFPSSTATFPETTTLTP) are enriched in low complexity. Positions 1324–1356 (PTTTTSFTTSPTMEPPSTTVATTGTGQTTFPSS) are enriched in low complexity. Repeat copies occupy residues 1893-1910 (VTTT…FTSS), 1911-1927 (IATT…FTSS), 1928-1944 (ITTT…FTSS), 1945-1961 (ITNT…FTSS), 1962-1978 (ITTT…LTSS), 1979-1995 (ITTT…YTSL), 1996-2012 (ITTT…FTSS), 2013-2029 (ITTT…LTSS), 2030-2046 (ITTT…FTSS), 2047-2062 (ITTE…FTSL), 2063-2079 (ITIT…YTTS), 2080-2096 (ITTT…FTSS), 2097-2113 (ITTT…FTSS), 2114-2130 (ITTS…FTSS), 2131-2147 (ITTT…FTSS), 2148-2164 (ITTT…FTSL), 2165-2191 (ITTT…FTSS), 2192-2208 (NTIT…YITS), 2209-2225 (ITTT…FSSS), 2226-2242 (ITTT…FTSS), 2243-2259 (ITTT…FTSS), 2260-2276 (ITTT…FTSS), 2277-2293 (ITTS…STSL), 2294-2310 (ITTT…FTSS), 2311-2327 (ITTT…FTSS), 2328-2344 (ITTT…FTSS), 2345-2361 (ITTT…FTSS), 2362-2378 (ITTT…FSSS), 2379-2395 (ITTT…LTSW), 2396-2412 (VTTT…LTSS), 2413-2429 (ITTT…FTSS), and 2430-2446 (ITTT…LSSS). Residues 1893 to 2446 (VTTTTKITSH…SESTPSLSSS (554 aa)) form a 32 X approximate tandem repeats, Ser/Thr-rich region. Polar residues predominate over residues 1907–1947 (FTSSIATTETPSHSTPRFTSSITTTETPSHSTPRFTSSITN). Positions 1948–2056 (TKTTSHSSPS…ITTETTSHST (109 aa)) are enriched in low complexity. 4 stretches are compositionally biased toward low complexity: residues 2100-2170 (TETT…TTET), 2177-2384 (TTET…TTET), 2393-2447 (TSWV…SSST), and 2464-2507 (TTSE…TTTT). 6 disordered regions span residues 2100-2447 (TETT…SSST), 2464-2508 (TTSE…TTTD), 2578-2608 (TQTP…DSST), 2631-2656 (IPST…TSTS), 2834-2858 (MMPE…VPTN), and 2897-2937 (SSLP…TSRR). Residues 2578-2602 (TQTPPVLTSATGTQTSPAPTTVTFG) show a composition bias toward polar residues. 3 stretches are compositionally biased toward low complexity: residues 2633 to 2656 (STHS…TSTS), 2834 to 2849 (MMPE…ASSS), and 2905 to 2937 (TSSK…TSRR). The 34-residue stretch at 2976–3009 (SGDRCQLQTRCQNGGQWDGLKCQCPSTFYGSSCE) folds into the EGF-like domain. 2 disulfide bridges follow: Cys-2980/Cys-2986 and Cys-2999/Cys-3008. The 126-residue stretch at 3018 to 3143 (DVVETEVGME…DSIKVNNNSK (126 aa)) folds into the SEA domain. A helical membrane pass occupies residues 3227-3247 (LVGGLTAGAALLVLLLLALGV).

Post-translationally, highly O-glycosylated and probably also N-glycosylated. Broad specificity; small intestine, colon, colonic tumors, heart, liver, thymus, prostate, pancreas and gall bladder.

It localises to the membrane. Its subcellular location is the secreted. Functionally, major glycoprotein component of a variety of mucus gels. Thought to provide a protective, lubricating barrier against particles and infectious agents at mucosal surfaces. May be involved in ligand binding and intracellular signaling. This is Mucin-3A from Homo sapiens (Human).